The primary structure comprises 373 residues: MTTSASSHLNKGIKQVYMSLPQGEKVQAMYIWIDGTGEGLRCKTRTLDSEPKCVEELPEWNFDGSSTLQSEGSNSDMYLVPAAMFRDPFRKDPNKLVLCEVFKYNRRPAETNLRHTCKRIMDMVSNQHPWFGMEQEYTLMGTDGHPFGWPSNGFPGPQGPYYCGVGADRAYGRDIVEAHYRACLYAGVKIAGTNAEVMPAQWEFQIGPCEGISMGDHLWVARFILHRVCEDFGVIATFDPKPIPGNWNGAGCHTNFSTKAMREENGLKYIEEAIEKLSKRHQYHIRAYDPKGGLDNARRLTGFHETSNINDFSAGVANRSASIRIPRTVGQEKKGYFEDRRPSANCDPFSVTEALIRTCLLNETGDEPFQYKN.

T2 bears the N-acetylthreonine mark. The required for glutamine-induced ubiquitination by CRL4(CRBN) and proteasomal degradation stretch occupies residues T2–K25. N6-acetyllysine; by EP300 is present on residues K11 and K14. The GS beta-grasp domain occupies E24–R106. Position 104 is a phosphotyrosine (Y104). The region spanning L113–N373 is the GS catalytic domain. E134 provides a ligand contact to ATP. Mn(2+)-binding residues include E134, E136, E196, and E203. Residue E203–P208 participates in ATP binding. Position 246 to 247 (N246 to W247) interacts with L-glutamate. Residue H253 participates in Mn(2+) binding. ATP-binding positions include N255–S257, R319, and R324. Residue R319 coordinates L-glutamate. Y336 to E338 is an ADP binding site. E338 contributes to the Mn(2+) binding site. R340 serves as a coordination point for L-glutamate. Position 343 is a phosphoserine (S343).

The protein belongs to the glutamine synthetase family. Decamer; composed of two pentamers. Interacts with PALMD. Interacts with RHOJ. Interacts with BEST2; this interaction tethers a fraction of GLUL to the membrane, causing a decrease of cytosolic glutamine synthase (GS) activity and inhibits the chloride channel activity of BEST2 by affecting the gating at the aperture in the absence of intracellular glutamate. Mg(2+) is required as a cofactor. Mn(2+) serves as cofactor. Post-translationally, acetylated by EP300/p300; acetylation is stimulated by increased glutamine levels and promotes ubiquitin-mediated proteasomal degradation. Palmitoylated; undergoes autopalmitoylation. In terms of processing, ubiquitinated by ZNRF1. Ubiquitinated by the DCX (DDB1-CUL4-X-box) E3 ubiquitin-protein ligase complex called CRL4(CRBN), leading to proteasomal degradation. As to expression, expressed in endothelial cells.

Its subcellular location is the cytoplasm. The protein resides in the cytosol. The protein localises to the microsome. It is found in the mitochondrion. It localises to the cell membrane. It catalyses the reaction L-glutamate + NH4(+) + ATP = L-glutamine + ADP + phosphate + H(+). It carries out the reaction L-cysteinyl-[protein] + hexadecanoyl-CoA = S-hexadecanoyl-L-cysteinyl-[protein] + CoA. Its activity is regulated as follows. Glutamine synthetase activity is inhibited by methionine sulfoximine (MSO). Its function is as follows. Glutamine synthetase that catalyzes the ATP-dependent conversion of glutamate and ammonia to glutamine. Its role depends on tissue localization: in the brain, it regulates the levels of toxic ammonia and converts neurotoxic glutamate to harmless glutamine, whereas in the liver, it is one of the enzymes responsible for the removal of ammonia. Plays a key role in ammonium detoxification during erythropoiesis: the glutamine synthetase activity is required to remove ammonium generated by porphobilinogen deaminase (HMBS) during heme biosynthesis to prevent ammonium accumulation and oxidative stress. Essential for proliferation of fetal skin fibroblasts. Independently of its glutamine synthetase activity, required for endothelial cell migration during vascular development: acts by regulating membrane localization and activation of the GTPase RHOJ, possibly by promoting RHOJ palmitoylation. May act as a palmitoyltransferase for RHOJ: able to autopalmitoylate and then transfer the palmitoyl group to RHOJ. Plays a role in ribosomal 40S subunit biogenesis. Through the interaction with BEST2, inhibits BEST2 channel activity by affecting the gating at the aperture in the absence of intracellular L-glutamate, but sensitizes BEST2 to intracellular L-glutamate, which promotes the opening of BEST2 and thus relieves its inhibitory effect on BEST2. The polypeptide is Glutamine synthetase (Homo sapiens (Human)).